Consider the following 688-residue polypeptide: MPNHQSGSPTGSSDLLLDGKKQRAHLALRRKRRREMRKINRKVRRMNLAPIKEKTAWQHLQALIFEAEEVLKTSQTPQTSLTLFLALLSVLGPPPVSGESYWAYLPKPPILHPVGWGNTDPIRVLTNQTIYLGGSPDFHGFRNMSGNVHFEEKSDTLPICFSFSFSTPTGCFQVDKQVFLSDTPTVDNNKPGGKGDKRRMWELWLTTLGNSGANTKLVPIKKKLPPKYPHCQIAFKKDAFWEGDESAPPRWLPCAFPDQGVSFSPKGALGLLWDFSLPSPSVDQSDQIKSKKDLFGNYTPPVNKEVHRWYEAGWVEPTWFWENSPKDPNDRDFTALVPHTELFRLVAASRYLILKRPGFQEHEMIPTSACVTYPYVILLGLPQLIDIEKRGSTFHISCSSCRLTNCLDSSAYDYAAIIVKRPPYVLLPVDIGDEPWFDDSAIQTFRYATDLIRAKRFVAAIILGISALIAIITSFAVATTALVKEMQTATFVNNLHRNVTLALSEQRIIDLKLEARLNALEEVVLDLGQDVANLKTRMSTRCHANYDFICVTPLPYNASESWERTKAHLLGIWNDNEISYNIQELTNLIGDMSKQHIDTVDLSGLAQSFANGVKALNPLDWTQYFIFIGVGALLLVIVLMIFPIVFQCLAKSLDQVQSDLNVLLLKKKKGGNAAPAAEMVELPRVSYT.

An N-terminal signal peptide occupies residues 1–98; that stretch reads MPNHQSGSPT…SVLGPPPVSG (98 aa). Topologically, residues 99–624 are extracellular; it reads ESYWAYLPKP…ALNPLDWTQY (526 aa). N-linked (GlcNAc...) asparagine; by host glycosylation is found at Asn127 and Asn143. Residues 426–474 adopt a coiled-coil conformation; it reads LLPVDIGDEPWFDDSAIQTFRYATDLIRAKRFVAAIILGISALIAIITS. Residues 455–456 constitute a propeptide that is removed on maturation; sequence KR. Residues 457–477 form a fusion peptide region; it reads FVAAIILGISALIAIITSFAV. Residues 463–481 form an immunosuppression region; sequence LGISALIAIITSFAVATTA. Asn498 carries N-linked (GlcNAc...) asparagine; by host glycosylation. A coiled-coil region spans residues 511–541; it reads LKLEARLNALEEVVLDLGQDVANLKTRMSTR. Asn557 is a glycosylation site (N-linked (GlcNAc...) asparagine; by host). A helical transmembrane segment spans residues 625–645; that stretch reads FIFIGVGALLLVIVLMIFPIV. Residues 646 to 688 lie on the Cytoplasmic side of the membrane; the sequence is FQCLAKSLDQVQSDLNVLLLKKKKGGNAAPAAEMVELPRVSYT.

As to quaternary structure, the mature envelope protein (Env) consists of a trimer of SU-TM heterodimers attached by non-covalent interactions or by a labile interchain disulfide bond. Specific enzymatic cleavages in vivo yield mature proteins. Envelope glycoproteins are synthesized as an inactive precursor that is N-glycosylated and processed likely by host cell furin or by a furin-like protease in the Golgi to yield the mature SU and TM proteins. The cleavage site between SU and TM requires the minimal sequence [KR]-X-[KR]-R.

It is found in the virion membrane. The protein localises to the host cell membrane. The surface protein (SU) attaches the virus to the host cell by binding to its receptor. This interaction triggers the refolding of the transmembrane protein (TM) and is thought to activate its fusogenic potential by unmasking its fusion peptide. Fusion occurs at the host cell plasma membrane. In terms of biological role, the transmembrane protein (TM) acts as a class I viral fusion protein. Under the current model, the protein has at least 3 conformational states: pre-fusion native state, pre-hairpin intermediate state, and post-fusion hairpin state. During viral and target cell membrane fusion, the coiled coil regions (heptad repeats) assume a trimer-of-hairpins structure, positioning the fusion peptide in close proximity to the C-terminal region of the ectodomain. The formation of this structure appears to drive apposition and subsequent fusion of viral and target cell membranes. Membranes fusion leads to delivery of the nucleocapsid into the cytoplasm. The sequence is that of Envelope glycoprotein gp70 (env) from Mouse mammary tumor virus (strain C3H) (MMTV).